A 191-amino-acid polypeptide reads, in one-letter code: Glycerol-3-phosphate acyltransferase (191 aa).

5 helical membrane-spanning segments follow: residues 5–25 (IVFV…ITKI), 50–70 (CIAA…VYIA), 78–98 (SFHM…PVWL), 112–132 (ILIA…LAVF), and 153–173 (SFFF…LIFF).

The protein belongs to the PlsY family. In terms of assembly, probably interacts with PlsX.

It is found in the cell membrane. It carries out the reaction an acyl phosphate + sn-glycerol 3-phosphate = a 1-acyl-sn-glycero-3-phosphate + phosphate. It functions in the pathway lipid metabolism; phospholipid metabolism. Its function is as follows. Catalyzes the transfer of an acyl group from acyl-phosphate (acyl-PO(4)) to glycerol-3-phosphate (G3P) to form lysophosphatidic acid (LPA). This enzyme utilizes acyl-phosphate as fatty acyl donor, but not acyl-CoA or acyl-ACP. The polypeptide is Glycerol-3-phosphate acyltransferase (Wolbachia sp. subsp. Brugia malayi (strain TRS)).